The chain runs to 135 residues: Photosystem II extrinsic protein U (135 aa).

A signal peptide spans 1–26 (MKNLVRLLAVIALIIGSFWGKVPAQA).

Belongs to the PsbU family. PSII is composed of 1 copy each of membrane proteins PsbA, PsbB, PsbC, PsbD, PsbE, PsbF, PsbH, PsbI, PsbJ, PsbK, PsbL, PsbM, PsbT, PsbX, PsbY, PsbZ, Psb30/Ycf12, peripheral proteins PsbO, CyanoQ (PsbQ), PsbU, PsbV and a large number of cofactors. It forms dimeric complexes.

It localises to the cellular thylakoid membrane. Its function is as follows. One of the extrinsic, lumenal subunits of photosystem II (PSII). PSII is a light-driven water plastoquinone oxidoreductase, using light energy to abstract electrons from H(2)O, generating a proton gradient subsequently used for ATP formation. The extrinsic proteins stabilize the structure of photosystem II oxygen-evolving complex (OEC), the ion environment of oxygen evolution and protect the OEC against heat-induced inactivation. The protein is Photosystem II extrinsic protein U of Microcystis aeruginosa (strain NIES-843 / IAM M-2473).